The primary structure comprises 126 residues: Large ribosomal subunit protein bL12 (126 aa).

It belongs to the bacterial ribosomal protein bL12 family. As to quaternary structure, homodimer. Part of the ribosomal stalk of the 50S ribosomal subunit. Forms a multimeric L10(L12)X complex, where L10 forms an elongated spine to which 2 to 4 L12 dimers bind in a sequential fashion. Binds GTP-bound translation factors.

Forms part of the ribosomal stalk which helps the ribosome interact with GTP-bound translation factors. Is thus essential for accurate translation. The polypeptide is Large ribosomal subunit protein bL12 (Bordetella avium (strain 197N)).